We begin with the raw amino-acid sequence, 489 residues long: MTFRNCVAVDLGASSGRVMLARYERECRSLTLREIHRFNNGLHSQNGYVTWDVDSLESAIRLGLNKVCEEGIRIDSIGIDTWGVDFVLLDQQGQRVGLPVAYRDSRTHGLMALAQKQLGKSDIYQRSGIQFLPFNTLYQLRALTEQQPELIPHIAHALLMPDYFSYRLTGKMNWEYTNATTTQLVNINSDDWDETLLAWSGANKAWFGRPTHPGNVIGHWICPQGNEIPVVAVASHDTASAVIASPLNGSRAAYLSSGTWSLMGFESQTPFTNDTALAANITNEGGAEGRYRVLKNIMGLWLLQRVLQERQINDLPALIAATQALPACRFIINPNDDRFINPDEMCSEIQAVCRETAQPIPESDAELGRCIFDSLALLYADVLHELAQLRGEDFSQLHIVGGGCQNTLLNQLCADACGIRVIAGPVEASTLGNIGIQLMALDELNNVDDFRQVVSTTANLTTFTPNPDSEIAHYVAQIHSTRQTKELCA.

Position 13–17 (13–17 (ASSGR)) interacts with ATP. A disulfide bridge links Cys68 with Cys222. Substrate is bound by residues Gly83 and 236–238 (HDT). The active-site Proton acceptor is Asp237. Thr259 is a binding site for ATP. Asn296 is a binding site for substrate. Gln304 is a binding site for ATP. A disulfide bridge links Cys353 with Cys370. Residue Gly402 participates in ATP binding. A disulfide bond links Cys413 and Cys417.

It belongs to the rhamnulokinase family. Monomer. Mg(2+) is required as a cofactor.

The catalysed reaction is L-rhamnulose + ATP = L-rhamnulose 1-phosphate + ADP + H(+). It participates in carbohydrate degradation; L-rhamnose degradation; glycerone phosphate from L-rhamnose: step 2/3. In terms of biological role, involved in the catabolism of L-rhamnose (6-deoxy-L-mannose). Catalyzes the transfer of the gamma-phosphate group from ATP to the 1-hydroxyl group of L-rhamnulose to yield L-rhamnulose 1-phosphate. The protein is Rhamnulokinase of Escherichia fergusonii (strain ATCC 35469 / DSM 13698 / CCUG 18766 / IAM 14443 / JCM 21226 / LMG 7866 / NBRC 102419 / NCTC 12128 / CDC 0568-73).